An 856-amino-acid polypeptide reads, in one-letter code: MASADKNGGSVSSVSSSRLQSRKPPNLSITIPPPEKETQAPGEQDSMLPEGFQNRRLKKSQPRTWAAHTTACPPSFLPKRKNPAYLKSVSLQEPRSRWQESSEKRPGFRRQASLSQSIRKGAAQWFGVSGDWEGQRQQWQRRSLHHCSMRYGRLKASCQRDLELPSQEAPSFQGTESPKPCKMPKIVDPLARGRAFRHPEEMDRPHAPHPPLTPGVLSLTSFTSVRSGYSHLPRRKRMSVAHMSLQAAAALLKGRSVLDATGQRCRVVKRSFAFPSFLEEDVVDGADTFDSSFFSKEEMSSMPDDVFESPPLSASYFRGIPHSASPVSPDGVQIPLKEYGRAPVPGPRRGKRIASKVKHFAFDRKKRHYGLGVVGNWLNRSYRRSISSTVQRQLESFDSHRPYFTYWLTFVHVIITLLVICTYGIAPVGFAQHVTTQLVLRNKGVYESVKYIQQENFWVGPSSIDLIHLGAKFSPCIRKDGQIEQLVLRERDLERDSGCCVQNDHSGCIQTQRKDCSETLATFVKWQDDTGPPMDKSDLGQKRTSGAVCHQDPRTCEEPASSGAHIWPDDITKWPICTEQARSNHTGFLHMDCEIKGRPCCIGTKGSCEITTREYCEFMHGYFHEEATLCSQVHCLDKVCGLLPFLNPEVPDQFYRLWLSLFLHAGVVHCLVSVVFQMTILRDLEKLAGWHRIAIIFILSGITGNLASAIFLPYRAEVGPAGSQFGLLACLFVELFQSWPLLERPWKAFLNLSAIVLFLFICGLLPWIDNIAHIFGFLSGLLLAFAFLPYITFGTSDKYRKRALILVSLLAFAGLFAALVLWLYIYPINWPWIEHLTCFPFTSRFCEKYELDQVLH.

The disordered stretch occupies residues 1 to 115 (MASADKNGGS…PGFRRQASLS (115 aa)). The Cytoplasmic portion of the chain corresponds to 1 to 409 (MASADKNGGS…HRPYFTYWLT (409 aa)). Serine 90 is subject to Phosphoserine. Residues 94-106 (PRSRWQESSEKRP) show a composition bias toward basic and acidic residues. Phosphoserine is present on residues serine 113 and serine 117. A disordered region spans residues 165–184 (PSQEAPSFQGTESPKPCKMP). Positions 191–271 (ARGRAFRHPE…GQRCRVVKRS (81 aa)) are involved in interaction with FRMD8. 3 positions are modified to phosphoserine: serine 323, serine 325, and serine 328. A helical transmembrane segment spans residues 410–430 (FVHVIITLLVICTYGIAPVGF). The Lumenal portion of the chain corresponds to 431-660 (AQHVTTQLVL…PDQFYRLWLS (230 aa)). The disordered stretch occupies residues 531-553 (GPPMDKSDLGQKRTSGAVCHQDP). A helical transmembrane segment spans residues 661-681 (LFLHAGVVHCLVSVVFQMTIL). Topologically, residues 682-692 (RDLEKLAGWHR) are cytoplasmic. A helical membrane pass occupies residues 693–713 (IAIIFILSGITGNLASAIFLP). The Lumenal segment spans residues 714 to 715 (YR). Residues 716–736 (AEVGPAGSQFGLLACLFVELF) traverse the membrane as a helical segment. Topologically, residues 737 to 747 (QSWPLLERPWK) are cytoplasmic. Residues 748–768 (AFLNLSAIVLFLFICGLLPWI) form a helical membrane-spanning segment. At 769–773 (DNIAH) the chain is on the lumenal side. A helical transmembrane segment spans residues 774-794 (IFGFLSGLLLAFAFLPYITFG). At 795–802 (TSDKYRKR) the chain is on the cytoplasmic side. The helical transmembrane segment at 803–823 (ALILVSLLAFAGLFAALVLWL) threads the bilayer. Residues 824–856 (YIYPINWPWIEHLTCFPFTSRFCEKYELDQVLH) lie on the Lumenal side of the membrane.

This sequence belongs to the peptidase S54 family. Interacts with EGF. Interacts (via cytoplasmic N-terminus) with FRMD8/iTAP; this interaction leads to mutual protein stabilization. Interacts with ADAM17/TACE. In terms of tissue distribution, found in the epidermis and esophageal epithelium.

The protein resides in the endoplasmic reticulum membrane. Its subcellular location is the cell membrane. Functionally, regulates ADAM17 protease, a sheddase of the epidermal growth factor (EGF) receptor ligands and TNF, thereby plays a role in sleep, cell survival, proliferation, migration and inflammation. Does not exhibit any protease activity on its own. This Homo sapiens (Human) protein is Inactive rhomboid protein 2 (RHBDF2).